The chain runs to 127 residues: Large ribosomal subunit protein bL17 (127 aa).

Belongs to the bacterial ribosomal protein bL17 family. As to quaternary structure, part of the 50S ribosomal subunit. Contacts protein L32.

The protein is Large ribosomal subunit protein bL17 of Enterococcus faecalis (strain ATCC 700802 / V583).